The following is a 22-amino-acid chain: Chlorophyllase type 1 (22 aa).

This sequence belongs to the AB hydrolase superfamily. Lipase family.

The catalysed reaction is a chlorophyll + H2O = a chlorophyllide + phytol + H(+). It functions in the pathway porphyrin-containing compound metabolism; chlorophyll degradation. Catalyzes the hydrolysis of ester bond in chlorophyll to yield chlorophyllide and phytol. The protein is Chlorophyllase type 1 of Chenopodium album (Fat hen).